Reading from the N-terminus, the 50-residue chain is Large ribosomal subunit protein bL33B (50 aa).

The protein belongs to the bacterial ribosomal protein bL33 family.

This chain is Large ribosomal subunit protein bL33B, found in Mycoplasmopsis agalactiae (strain NCTC 10123 / CIP 59.7 / PG2) (Mycoplasma agalactiae).